Here is a 494-residue protein sequence, read N- to C-terminus: Glycosyl hydrolase family 109 protein (494 aa).

2 disordered regions span residues methionine 1 to threonine 35 and glutamate 59 to valine 86. The tat-type signal signal peptide spans methionine 1–alanine 55. The span at aspartate 12 to asparagine 22 shows a compositional bias: basic and acidic residues. Residues asparagine 103–arginine 104, aspartate 125, tryptophan 174–histidine 177, glutamate 194–cysteine 195, and asparagine 223 each bind NAD(+). Residues tyrosine 252, arginine 271, tyrosine 283–histidine 286, and tyrosine 365 contribute to the substrate site. Tyrosine 283 lines the NAD(+) pocket. The tract at residues lysine 463–proline 494 is disordered. Basic and acidic residues predominate over residues threonine 475–proline 494.

It belongs to the Gfo/Idh/MocA family. Glycosyl hydrolase 109 subfamily. Requires NAD(+) as cofactor. In terms of processing, predicted to be exported by the Tat system. The position of the signal peptide cleavage has not been experimentally proven.

Its function is as follows. Glycosidase. This chain is Glycosyl hydrolase family 109 protein, found in Streptomyces niveus (Streptomyces spheroides).